Reading from the N-terminus, the 205-residue chain is Cytochrome c biogenesis ATP-binding export protein CcmA 1 (205 aa).

The region spanning 2-205 is the ABC transporter domain; it reads LEARDLYCER…LALTGGGAGL (204 aa). ATP is bound at residue 34–41; that stretch reads GGNGAGKT.

This sequence belongs to the ABC transporter superfamily. CcmA exporter (TC 3.A.1.107) family. In terms of assembly, the complex is composed of two ATP-binding proteins (CcmA) and two transmembrane proteins (CcmB).

The protein localises to the cell inner membrane. It carries out the reaction heme b(in) + ATP + H2O = heme b(out) + ADP + phosphate + H(+). Its function is as follows. Part of the ABC transporter complex CcmAB involved in the biogenesis of c-type cytochromes; once thought to export heme, this seems not to be the case, but its exact role is uncertain. Responsible for energy coupling to the transport system. The polypeptide is Cytochrome c biogenesis ATP-binding export protein CcmA 1 (Salmonella typhimurium (strain LT2 / SGSC1412 / ATCC 700720)).